The sequence spans 878 residues: Outer membrane usher protein FimD (878 aa).

The signal sequence occupies residues 1-45; it reads MSYLNLRLYQRNTQCLHIRKHRLAGFFVRLVVACAFAAQAPLSSA. A disulfide bridge connects residues Cys-855 and Cys-877.

It belongs to the fimbrial export usher family.

The protein localises to the cell outer membrane. Functionally, involved in the export and assembly of FimA fimbrial subunits across the outer membrane. The protein is Outer membrane usher protein FimD (fimD) of Escherichia coli (strain K12).